Consider the following 554-residue polypeptide: MPTVDDILEQVGHFHFFQKQTFFLLALISAAFTPIYVGIVFLGFTPDHRCRSPGVAELSQRCGWSPGEELNYTVPGLGAADGAFARQCMRYEVDWNQSSPGCVDPLASLAPNRSHLPLGPCQHGWVYDTPGSSIVTEFNLVCARSWMLDLFQSAVNIGFFIGSVGIGYLADRFGRKLCLLVTILINAAAGVLMAVSPNYTWMLIFRLIQGLVSKAGWLIGYILITEFVGLNYRRTVGILYQVAFTVGLLVLAGVAYALPRWRWLQLTVTLPYFCFLLYYWCIPESPRWLISQNKNAKAMRIMEHIAKKNGKSLPVSLQSLRAAEDVGEKLNPSFLDLVRTPQIRKHTCILMYNWFTSSVLYQGLIMHLGLAGGDIYLDFFYSALVEFPAAFLIIATIDRVGRRYPWAVSNMVAGAACLASVFVPDDLQGLRITVACLGRMGITMAYEMVCLVNAELYPTFIRNLGVLVCSSLCDVGGIVTPFLVYRLTAIWLQLPLVVFAVVGLVAGGLVLMLPETKGRTLPETIEEAENLQRPRKNREKVIYVHVRKADGPLT.

The Cytoplasmic segment spans residues Met1–Thr21. The helical transmembrane segment at Phe22–Leu42 threads the bilayer. The Extracellular portion of the chain corresponds to Gly43–Asp149. Asn71 carries an N-linked (GlcNAc...) asparagine glycan. A helical membrane pass occupies residues Leu150 to Ala170. Residues Asp171–Lys176 lie on the Cytoplasmic side of the membrane. The chain crosses the membrane as a helical span at residues Leu177–Pro197. N-linked (GlcNAc...) asparagine glycosylation is present at Asn198. At Asn198–Gln209 the chain is on the extracellular side. A helical membrane pass occupies residues Gly210–Leu230. Over Asn231–Gly237 the chain is Cytoplasmic. Residues Ile238 to Leu258 traverse the membrane as a helical segment. The Extracellular segment spans residues Pro259 to Arg262. The chain crosses the membrane as a helical span at residues Trp263 to Pro283. Residues Pro283–Arg287 carry the Proline-rich sequence motif. The Cytoplasmic segment spans residues Glu284–Cys348. The helical transmembrane segment at Ile349–Gly369 threads the bilayer. Over Leu370–Asp374 the chain is Extracellular. Residues Ile375–Ala395 traverse the membrane as a helical segment. Topologically, residues Thr396–Arg403 are cytoplasmic. Residues Tyr404–Pro424 form a helical membrane-spanning segment. The Extracellular segment spans residues Asp425–Leu427. Residues Gln428 to Cys450 form a helical membrane-spanning segment. Topologically, residues Leu451–Asn463 are cytoplasmic. Residues Leu464–Val484 form a helical membrane-spanning segment. At Tyr485–Gln493 the chain is on the extracellular side. Residues Leu494–Pro514 traverse the membrane as a helical segment. Over Glu515 to Thr554 the chain is Cytoplasmic.

This sequence belongs to the major facilitator (TC 2.A.1) superfamily. Organic cation transporter (TC 2.A.1.19) family. In terms of processing, tyrosine phosphorylated. In terms of tissue distribution, expressed in kidney.

Its subcellular location is the basolateral cell membrane. It is found in the basal cell membrane. The enzyme catalyses (R)-noradrenaline(out) = (R)-noradrenaline(in). It carries out the reaction (R)-adrenaline(out) = (R)-adrenaline(in). It catalyses the reaction serotonin(out) = serotonin(in). The catalysed reaction is dopamine(out) = dopamine(in). The enzyme catalyses histamine(out) = histamine(in). It carries out the reaction thiamine(in) = thiamine(out). It catalyses the reaction creatinine(in) = creatinine(out). The catalysed reaction is 1-methylnicotinamide(out) = 1-methylnicotinamide(in). The enzyme catalyses guanidine(out) = guanidine(in). It carries out the reaction choline(out) = choline(in). It catalyses the reaction agmatine(out) = agmatine(in). The catalysed reaction is putrescine(out) = putrescine(in). The enzyme catalyses spermidine(in) = spermidine(out). It carries out the reaction tyramine(in) = tyramine(out). It catalyses the reaction L-histidyl-L-proline diketopiperazine(in) = L-histidyl-L-proline diketopiperazine(out). The catalysed reaction is (R)-salsolinol(in) = (R)-salsolinol(out). The enzyme catalyses N-methyl-(R)-salsolinol(in) = N-methyl-(R)-salsolinol(out). It carries out the reaction acetylcholine(in) = acetylcholine(out). It catalyses the reaction prostaglandin F2alpha(out) = prostaglandin F2alpha(in). The catalysed reaction is prostaglandin E2(out) = prostaglandin E2(in). Tyrosine phosphorylation of the transporter leads to activation of the transport activity. Inhibited by cGMP, most likely through a cGMP-binding protein that interacts with OCT2. Its function is as follows. Electrogenic voltage-dependent transporter that mediates the transport of a variety of organic cations such as endogenous bioactive amines, cationic drugs and xenobiotics. Functions as a Na(+)-independent, bidirectional uniporter. Cation cellular uptake or release is driven by the electrochemical potential, i.e. membrane potential and concentration gradient. However, may also engage electroneutral cation exchange when saturating concentrations of cation substrates are reached. Predominantly expressed at the basolateral membrane of hepatocytes and proximal tubules and involved in the uptake and disposition of cationic compounds by hepatic and renal clearance from the blood flow. Implicated in monoamine neurotransmitters uptake such as histamine, dopamine, adrenaline/epinephrine, noradrenaline/norepinephrine, serotonin and tyramine, thereby supporting a physiological role in the central nervous system by regulating interstitial concentrations of neurotransmitters. Also capable of transporting dopaminergic neuromodulators cyclo(his-pro), salsolinol and N-methyl-salsolinol, thereby involved in the maintenance of dopaminergic cell integrity in the central nervous system. Mediates the bidirectional transport of acetylcholine (ACh) at the apical membrane of ciliated cell in airway epithelium, thereby playing a role in luminal release of ACh from bronchial epithelium. Also transports guanidine and endogenous monoamines such as vitamin B1/thiamine, creatinine and N-1-methylnicotinamide (NMN). Mediates the uptake and efflux of quaternary ammonium compound choline. Mediates the bidirectional transport of polyamine agmatine and the uptake of polyamines putrescine and spermidine. Able to transport non-amine endogenous compounds such as prostaglandin E2 (PGE2) and prostaglandin F2-alpha (PGF2-alpha). Also involved in the uptake of xenobiotic 4-(4-(dimethylamino)styryl)-N-methylpyridinium (ASP). May contribute to regulate the transport of organic compounds in testis across the blood-testis-barrier. The polypeptide is Solute carrier family 22 member 2 (SLC22A2) (Oryctolagus cuniculus (Rabbit)).